A 459-amino-acid chain; its full sequence is Protoheme IX farnesyltransferase (459 aa).

Residues 1 to 184 are unknown; sequence MSRNTATQFV…AYVQLMKPRL (184 aa). 12 consecutive transmembrane segments (helical) span residues 9-29, 66-86, 93-113, 123-143, 184-204, 211-231, 262-282, 284-304, 325-345, 382-402, 403-423, and 438-458; these read FVAV…LGAT, AAAL…RTGA, AVTL…YTAM, VHLT…AWTL, LMWL…SQLG, AATV…SGTF, LAFG…VNLL, AVLG…VLKP, WVAV…VIFL, HIVY…ELTG, LGPL…YFAI, and FHAS…DTMV. Positions 185–459 are protoheme IX prenyltransferase; it reads MWLLCLVAGA…VAVVLDTMVV (275 aa).

In the C-terminal section; belongs to the UbiA prenyltransferase family. Protoheme IX farnesyltransferase subfamily.

Its subcellular location is the cell membrane. It carries out the reaction heme b + (2E,6E)-farnesyl diphosphate + H2O = Fe(II)-heme o + diphosphate. It functions in the pathway porphyrin-containing compound metabolism; heme O biosynthesis; heme O from protoheme: step 1/1. Its function is as follows. Converts heme B (protoheme IX) to heme O by substitution of the vinyl group on carbon 2 of heme B porphyrin ring with a hydroxyethyl farnesyl side group. The polypeptide is Protoheme IX farnesyltransferase (ctaB) (Halobacterium salinarum (strain ATCC 29341 / DSM 671 / R1)).